The chain runs to 264 residues: 5'-nucleotidase SurE (264 aa).

A divalent metal cation-binding residues include D12, D13, S43, and N98.

Belongs to the SurE nucleotidase family. The cofactor is a divalent metal cation.

It is found in the cytoplasm. The catalysed reaction is a ribonucleoside 5'-phosphate + H2O = a ribonucleoside + phosphate. Nucleotidase that shows phosphatase activity on nucleoside 5'-monophosphates. In Sulfurovum sp. (strain NBC37-1), this protein is 5'-nucleotidase SurE.